Consider the following 212-residue polypeptide: Phosphatidylserine decarboxylase proenzyme (212 aa).

The active-site Schiff-base intermediate with substrate; via pyruvic acid is Ser-182. Residue Ser-182 is modified to Pyruvic acid (Ser); by autocatalysis.

This sequence belongs to the phosphatidylserine decarboxylase family. PSD-A subfamily. Heterodimer of a large membrane-associated beta subunit and a small pyruvoyl-containing alpha subunit. The cofactor is pyruvate. Post-translationally, is synthesized initially as an inactive proenzyme. Formation of the active enzyme involves a self-maturation process in which the active site pyruvoyl group is generated from an internal serine residue via an autocatalytic post-translational modification. Two non-identical subunits are generated from the proenzyme in this reaction, and the pyruvate is formed at the N-terminus of the alpha chain, which is derived from the carboxyl end of the proenzyme. The post-translation cleavage follows an unusual pathway, termed non-hydrolytic serinolysis, in which the side chain hydroxyl group of the serine supplies its oxygen atom to form the C-terminus of the beta chain, while the remainder of the serine residue undergoes an oxidative deamination to produce ammonia and the pyruvoyl prosthetic group on the alpha chain.

It is found in the cell membrane. The catalysed reaction is a 1,2-diacyl-sn-glycero-3-phospho-L-serine + H(+) = a 1,2-diacyl-sn-glycero-3-phosphoethanolamine + CO2. The protein operates within phospholipid metabolism; phosphatidylethanolamine biosynthesis; phosphatidylethanolamine from CDP-diacylglycerol: step 2/2. Functionally, catalyzes the formation of phosphatidylethanolamine (PtdEtn) from phosphatidylserine (PtdSer). This Paraburkholderia phytofirmans (strain DSM 17436 / LMG 22146 / PsJN) (Burkholderia phytofirmans) protein is Phosphatidylserine decarboxylase proenzyme.